Here is a 254-residue protein sequence, read N- to C-terminus: Dolichol-phosphate mannosyltransferase subunit 1 (254 aa).

P25, Y27, E29, V56, D58, D111, A112, D113, R140, and R227 together coordinate GDP-alpha-D-mannose. D113 is a Mg(2+) binding site. Residue D113 coordinates Mn(2+).

The protein belongs to the glycosyltransferase 2 family. As to quaternary structure, component of the dolichol-phosphate mannose (DPM) synthase complex composed of dpm1, dpm2 and dpm3. Requires Mg(2+) as cofactor. Mn(2+) serves as cofactor. The cofactor is Ca(2+).

The protein resides in the endoplasmic reticulum. It carries out the reaction a di-trans,poly-cis-dolichyl phosphate + GDP-alpha-D-mannose = a di-trans,poly-cis-dolichyl beta-D-mannosyl phosphate + GDP. The protein operates within protein modification; protein glycosylation. Its function is as follows. Transfers mannose from GDP-mannose to dolichol monophosphate to form dolichol phosphate mannose (Dol-P-Man) which is the mannosyl donor in pathways leading to N-glycosylation, glycosyl phosphatidylinositol membrane anchoring, and O-mannosylation of proteins; catalytic subunit of the dolichol-phosphate mannose (DPM) synthase complex. This chain is Dolichol-phosphate mannosyltransferase subunit 1 (dpm1), found in Dictyostelium discoideum (Social amoeba).